A 94-amino-acid chain; its full sequence is Large ribosomal subunit protein uL23 (94 aa).

Belongs to the universal ribosomal protein uL23 family. In terms of assembly, part of the 50S ribosomal subunit. Contacts protein L29, and trigger factor when it is bound to the ribosome.

Its function is as follows. One of the early assembly proteins it binds 23S rRNA. One of the proteins that surrounds the polypeptide exit tunnel on the outside of the ribosome. Forms the main docking site for trigger factor binding to the ribosome. The chain is Large ribosomal subunit protein uL23 from Listeria monocytogenes serotype 4b (strain CLIP80459).